The primary structure comprises 453 residues: DNA repair protein RadA (453 aa).

The segment at 10–27 (CTECGATFPKWAGQCADC) adopts a C4-type zinc-finger fold. Residue 96 to 103 (GDPGIGKS) coordinates ATP. The RadA KNRFG motif signature appears at 252–256 (KNRFG). The tract at residues 351-453 (DVFLNVVGGV…LEQALDALFE (103 aa)) is lon-protease-like.

This sequence belongs to the RecA family. RadA subfamily.

Functionally, DNA-dependent ATPase involved in processing of recombination intermediates, plays a role in repairing DNA breaks. Stimulates the branch migration of RecA-mediated strand transfer reactions, allowing the 3' invading strand to extend heteroduplex DNA faster. Binds ssDNA in the presence of ADP but not other nucleotides, has ATPase activity that is stimulated by ssDNA and various branched DNA structures, but inhibited by SSB. Does not have RecA's homology-searching function. This chain is DNA repair protein RadA, found in Pseudomonas aeruginosa (strain ATCC 15692 / DSM 22644 / CIP 104116 / JCM 14847 / LMG 12228 / 1C / PRS 101 / PAO1).